A 1123-amino-acid polypeptide reads, in one-letter code: RNA-binding protein 6 (1123 aa).

Disordered regions lie at residues 1-391 and 413-454; these read MWGD…EGGL and LPGS…EEKP. Serine 17 carries the phosphoserine modification. Lysine 36 participates in a covalent cross-link: Glycyl lysine isopeptide (Lys-Gly) (interchain with G-Cter in SUMO2). The segment covering 79–97 has biased composition (basic and acidic residues); sequence DGPHGDYRGGEGPGHDFRG. The segment covering 98 to 114 has biased composition (low complexity); it reads GDFSSSDFQSRDSSQLD. 2 stretches are compositionally biased toward basic and acidic residues: residues 115–131 and 145–237; these read FRGR…REGP and YRGR…DFRG. Serine 240 bears the Phosphoserine mark. Composition is skewed to basic and acidic residues over residues 245 to 286 and 301 to 323; these read LDFR…REMP and QDRE…HTIE. Lysine 331 is covalently cross-linked (Glycyl lysine isopeptide (Lys-Gly) (interchain with G-Cter in SUMO2)). A compositionally biased stretch (basic and acidic residues) spans 332–354; the sequence is GEFEHSETREGETQGVAFEHESP. Threonine 344 carries the post-translational modification Phosphothreonine. Polar residues predominate over residues 356–365; the sequence is DFQNSQSPVQ. Phosphoserine is present on residues serine 360 and serine 362. Composition is skewed to basic and acidic residues over residues 366 to 391 and 431 to 454; these read DQDK…EGGL and KTAR…EEKP. Glycyl lysine isopeptide (Lys-Gly) (interchain with G-Cter in SUMO2) cross-links involve residues lysine 386, lysine 453, lysine 469, and lysine 569. The 81-residue stretch at 456 to 536 folds into the RRM domain; sequence RLIRLSGVPE…KEVTLEYVSS (81 aa). Disordered regions lie at residues 574–654, 741–787, and 827–948; these read TYPQ…QDGE, KRRN…QSSS, and EEEI…EEDK. Composition is skewed to basic and acidic residues over residues 597 to 654 and 742 to 754; these read PADK…QDGE and RRND…DHMH. Positions 772–787 are enriched in polar residues; that stretch reads SDWSSDTNRQGQQSSS. Positions 843–860 are enriched in basic and acidic residues; sequence SKKEMSKRDGKEKKDRGV. Glycyl lysine isopeptide (Lys-Gly) (interchain with G-Cter in SUMO2) cross-links involve residues lysine 871, lysine 879, and lysine 887. The residue at position 891 (serine 891) is a Phosphoserine. Acidic residues predominate over residues 910–922; it reads GDSDYEEEEEEEQ. Basic and acidic residues predominate over residues 934–948; it reads QKREEQTKKENEEDK. Glycyl lysine isopeptide (Lys-Gly) (interchain with G-Cter in SUMO2) cross-links involve residues lysine 935, lysine 948, lysine 991, and lysine 1019. The span at 1004 to 1051 shows a compositional bias: basic and acidic residues; it reads EREGKFKGRGNDRREKLQSFDSPERKRIKYSRETDSDRKLVDKEDIDT. The disordered stretch occupies residues 1004–1106; it reads EREGKFKGRG…RTSKRQSNET (103 aa). Serine 1022 and serine 1025 each carry phosphoserine. Residues lysine 1042, lysine 1046, and lysine 1066 each participate in a glycyl lysine isopeptide (Lys-Gly) (interchain with G-Cter in SUMO2) cross-link. One can recognise a G-patch domain in the interval 1051-1097; the sequence is TSSKGGCVQQATGWRKGTGLGYGHPGLASSEEAEGRMRGPSVGASGR.

May interact with FAM168B. In terms of tissue distribution, ubiquitous in adults.

The protein resides in the nucleus. Functionally, specifically binds poly(G) RNA homopolymers in vitro. The sequence is that of RNA-binding protein 6 (RBM6) from Homo sapiens (Human).